Reading from the N-terminus, the 360-residue chain is Mannose-1-phosphate guanylyltransferase catalytic subunit beta (360 aa).

Positions 2–222 (KALILVGGYG…QGFWMDIGQP (221 aa)) are substrate-binding domain. D110 lines the GDP-alpha-D-mannose pocket. Mg(2+) is bound at residue D110. K162 is a catalytic residue. D218 lines the GDP-alpha-D-mannose pocket. D218 lines the Mg(2+) pocket. Residues 245-360 (HVGPGFIGNV…ESVPEPRIIM (116 aa)) form a hexapeptide repeat domain region.

This sequence belongs to the transferase hexapeptide repeat family. As to quaternary structure, component of the GMPPA-GMPPB mannose-1-phosphate guanylyltransferase complex composed of 4 gmppa subunits and 8 gmppb subunits; the complex is organized into three layers, a central layer made up of 2 gmppa dimers sandwiched between two layers each made up of 2 gmppb dimers. Catalytic activity of gmppb is reduced when part of the complex and binding of GDP-alpha-D-Mannose by gmppa induces allosteric feedback inhibition of gmppb. Requires Mg(2+) as cofactor.

The enzyme catalyses alpha-D-mannose 1-phosphate + GTP + H(+) = GDP-alpha-D-mannose + diphosphate. It functions in the pathway nucleotide-sugar biosynthesis; GDP-alpha-D-mannose biosynthesis; GDP-alpha-D-mannose from alpha-D-mannose 1-phosphate (GTP route): step 1/1. Its activity is regulated as follows. Enzyme activity is reduced by incorporation into the GMPPA-GMPPB mannose-1-phosphate guanylyltransferase complex. Allosterically inhibited, when part of the GMPPA-GMPPB complex, by GDP-alpha-D-mannose binding to GMPPA. Catalytic subunit of the GMPPA-GMPPB mannose-1-phosphate guanylyltransferase complex. Catalyzes the formation of GDP-mannose, an essential precursor of glycan moieties of glycoproteins and glycolipids. Can catalyze the reverse reaction in vitro. Together with GMPPA regulates GDP-alpha-D-mannose levels. This is Mannose-1-phosphate guanylyltransferase catalytic subunit beta (gmppb) from Xenopus tropicalis (Western clawed frog).